A 495-amino-acid polypeptide reads, in one-letter code: Tripartite motif-containing protein 5 (495 aa).

The residue at position 2 (Ala-2) is an N-acetylalanine. Residues 15-60 form an RING-type zinc finger; sequence CPICLELLTEPLSLHCGHSFCQACITANHKKSMLYKEGERSCPVCR. Ser-87 carries the post-translational modification Phosphoserine. A B box-type zinc finger spans residues 92-133; sequence QKVDHCARHGEKLLLFCQEDSKVICWLCERSQEHRGHHTFLM. 4 residues coordinate Zn(2+): Cys-97, His-100, Cys-119, and His-125. A coiled-coil region spans residues 137-223; that stretch reads AQEYHVKLQT…KSLTKSETKM (87 aa). The tract at residues 187–200 is required for interaction with GABARAP and for autophagy; that stretch reads FEQLREILDREESN. The 213-residue stretch at 283–495 folds into the B30.2/SPRY domain; that stretch reads LKGMLDMFRE…VPMTLCSPSS (213 aa).

This sequence belongs to the TRIM/RBCC family. In terms of assembly, can form homodimers and homotrimers. In addition to lower-order dimerization, also exhibits a higher-order multimerization and both low- and high-order multimerizations are essential for its restriction activity. Interacts with BTBD1 and BTBD2. Interacts with PSMC4, PSMC5, PSMD7 and HSPA8/HSC70. Interacts (via B30.2/SPRY domain) with HSPA1A/B. Interacts with PSMC2, MAP3K7/TAK1, TAB2 and TAB3. Interacts with SQSTM1. Interacts with TRIM6 and TRIM34. Interacts with ULK1 (phosphorylated form), GABARAP, GABARAPL1, GABARAPL2, MAP1LC3A, MAP1LC3C and BECN1. In terms of processing, degraded in a proteasome-independent fashion in the absence of viral infection but in a proteasome-dependent fashion following exposure to restriction sensitive virus. Autoubiquitinated in a RING finger- and UBE2D2-dependent manner. Monoubiquitinated by TRIM21. Deubiquitinated by Yersinia YopJ. Ubiquitination may not lead to proteasomal degradation.

It localises to the cytoplasm. Its subcellular location is the nucleus. The catalysed reaction is S-ubiquitinyl-[E2 ubiquitin-conjugating enzyme]-L-cysteine + [acceptor protein]-L-lysine = [E2 ubiquitin-conjugating enzyme]-L-cysteine + N(6)-ubiquitinyl-[acceptor protein]-L-lysine.. It functions in the pathway protein modification; protein ubiquitination. In terms of biological role, capsid-specific restriction factor that prevents infection from non-host-adapted retroviruses. Blocks viral replication early in the life cycle, after viral entry but before reverse transcription. In addition to acting as a capsid-specific restriction factor, also acts as a pattern recognition receptor that activates innate immune signaling in response to the retroviral capsid lattice. Binding to the viral capsid triggers its E3 ubiquitin ligase activity, and in concert with the heterodimeric ubiquitin conjugating enzyme complex UBE2V1-UBE2N (also known as UBC13-UEV1A complex) generates 'Lys-63'-linked polyubiquitin chains, which in turn are catalysts in the autophosphorylation of the MAP3K7/TAK1 complex (includes TAK1, TAB2, and TAB3). Activation of the MAP3K7/TAK1 complex by autophosphorylation results in the induction and expression of NF-kappa-B and MAPK-responsive inflammatory genes, thereby leading to an innate immune response in the infected cell. Plays a role in regulating autophagy through activation of autophagy regulator BECN1 by causing its dissociation from its inhibitors BCL2 and TAB2. This Macaca nemestrina (Pig-tailed macaque) protein is Tripartite motif-containing protein 5 (TRIM5).